The following is a 304-amino-acid chain: Quinolinate synthase (304 aa).

2 residues coordinate iminosuccinate: histidine 24 and serine 41. Cysteine 86 contacts [4Fe-4S] cluster. Iminosuccinate is bound by residues 112 to 114 (YVN) and serine 129. Residue cysteine 171 participates in [4Fe-4S] cluster binding. Residues 197–199 (HPE) and threonine 214 contribute to the iminosuccinate site. A [4Fe-4S] cluster-binding site is contributed by cysteine 259.

This sequence belongs to the quinolinate synthase family. Type 2 subfamily. [4Fe-4S] cluster serves as cofactor.

It is found in the cytoplasm. It catalyses the reaction iminosuccinate + dihydroxyacetone phosphate = quinolinate + phosphate + 2 H2O + H(+). Its pathway is cofactor biosynthesis; NAD(+) biosynthesis; quinolinate from iminoaspartate: step 1/1. Catalyzes the condensation of iminoaspartate with dihydroxyacetone phosphate to form quinolinate. The polypeptide is Quinolinate synthase (Geobacter sp. (strain M21)).